We begin with the raw amino-acid sequence, 186 residues long: Large ribosomal subunit protein uL5 (186 aa).

Belongs to the universal ribosomal protein uL5 family. In terms of assembly, part of the 50S ribosomal subunit; contacts the 5S rRNA and probably tRNA. Forms a bridge to the 30S subunit in the 70S ribosome.

Its function is as follows. This is one of the proteins that bind and probably mediate the attachment of the 5S RNA into the large ribosomal subunit, where it forms part of the central protuberance. In the 70S ribosome it contacts protein S13 of the 30S subunit (bridge B1b), connecting the 2 subunits; this bridge is implicated in subunit movement. May contact the P site tRNA; the 5S rRNA and some of its associated proteins might help stabilize positioning of ribosome-bound tRNAs. This is Large ribosomal subunit protein uL5 from Pyrococcus furiosus (strain ATCC 43587 / DSM 3638 / JCM 8422 / Vc1).